The sequence spans 312 residues: MLYLYNKHPRIKLRNAAIFDNINRVTVSFYKYIFIHEPIKFRNSLYRMFFKFNIFGRVYIANEGINAQISIPKKIYHKAINIITTSFAVLKDINVNLALDNRESFWVLRMKVRKKILFDNLPIDFFDPNNVGTYLSAKDVNNMLENKNSVLVDMRNHYEYKIGHFDSAINVPVNTFREQLFHIVDFLKHYKNRDIIMYCTGGIRCEKATAWIKYNGFKNVYQIKGGIIKYVRDARIENLLVKFRGKNFVFDERMSEVVSKDVLSKCDQCENLCDTYVNCFNSRCHNLFIQCNFCRKKFHNCCSEHCFKTLLK.

One can recognise a Rhodanese domain in the interval 145–235; it reads ENKNSVLVDM…GIIKYVRDAR (91 aa). Catalysis depends on C199, which acts as the Cysteine persulfide intermediate.

This sequence belongs to the TrhO family.

The enzyme catalyses uridine(34) in tRNA + AH2 + O2 = 5-hydroxyuridine(34) in tRNA + A + H2O. Its function is as follows. Catalyzes oxygen-dependent 5-hydroxyuridine (ho5U) modification at position 34 in tRNAs. This is tRNA uridine(34) hydroxylase from Buchnera aphidicola subsp. Baizongia pistaciae (strain Bp).